A 112-amino-acid chain; its full sequence is T cell receptor alpha variable 2 (112 aa).

An N-terminal signal peptide occupies residues 1 to 25; sequence MALQSTLGAVWLGLLLNSLWKVAES. The region spanning 26–112 is the Ig-like domain; that stretch reads KDQVFQPSTV…DAAVYYCAVE (87 aa). Residues cysteine 47 and cysteine 109 are joined by a disulfide bond. N-linked (GlcNAc...) asparagine glycosylation is found at asparagine 48 and asparagine 84.

In terms of assembly, alpha-beta TR is a heterodimer composed of an alpha and beta chain; disulfide-linked. The alpha-beta TR is associated with the transmembrane signaling CD3 coreceptor proteins to form the TR-CD3 (TcR or TCR). The assembly of alpha-beta TR heterodimers with CD3 occurs in the endoplasmic reticulum where a single alpha-beta TR heterodimer associates with one CD3D-CD3E heterodimer, one CD3G-CD3E heterodimer and one CD247 homodimer forming a stable octameric structure. CD3D-CD3E and CD3G-CD3E heterodimers preferentially associate with TR alpha and TR beta chains, respectively. The association of the CD247 homodimer is the last step of TcR assembly in the endoplasmic reticulum and is required for transport to the cell surface.

It localises to the cell membrane. Its function is as follows. V region of the variable domain of T cell receptor (TR) alpha chain that participates in the antigen recognition. Alpha-beta T cell receptors are antigen specific receptors which are essential to the immune response and are present on the cell surface of T lymphocytes. Recognize peptide-major histocompatibility (MH) (pMH) complexes that are displayed by antigen presenting cells (APC), a prerequisite for efficient T cell adaptive immunity against pathogens. Binding of alpha-beta TR to pMH complex initiates TR-CD3 clustering on the cell surface and intracellular activation of LCK that phosphorylates the ITAM motifs of CD3G, CD3D, CD3E and CD247 enabling the recruitment of ZAP70. In turn ZAP70 phosphorylates LAT, which recruits numerous signaling molecules to form the LAT signalosome. The LAT signalosome propagates signal branching to three major signaling pathways, the calcium, the mitogen-activated protein kinase (MAPK) kinase and the nuclear factor NF-kappa-B (NF-kB) pathways, leading to the mobilization of transcription factors that are critical for gene expression and essential for T cell growth and differentiation. The T cell repertoire is generated in the thymus, by V-(D)-J rearrangement. This repertoire is then shaped by intrathymic selection events to generate a peripheral T cell pool of self-MH restricted, non-autoaggressive T cells. Post-thymic interaction of alpha-beta TR with the pMH complexes shapes TR structural and functional avidity. This chain is T cell receptor alpha variable 2, found in Homo sapiens (Human).